The primary structure comprises 115 residues: U3-lycotoxin-Ls1a (115 aa).

Positions 1–20 (MKFVLLFGVFLVTLFSYSSA) are cleaved as a signal peptide. Positions 21–44 (EMLDDFDQAAEDELLSLIEKEEAR) are excised as a propeptide. 4 disulfides stabilise this stretch: C48/C63, C55/C72, C62/C87, and C74/C85.

This sequence belongs to the neurotoxin 19 (CSTX) family. 01 subfamily. In terms of tissue distribution, expressed by the venom gland.

It localises to the secreted. The sequence is that of U3-lycotoxin-Ls1a from Lycosa singoriensis (Wolf spider).